A 732-amino-acid polypeptide reads, in one-letter code: Catalase-peroxidase (732 aa).

Positions 1 to 10 are enriched in basic and acidic residues; it reads MDAKTDDKAG. Residues 1 to 26 form a disordered region; the sequence is MDAKTDDKAGKCPVAHGPAPRGNRDW. The segment at residues 95-217 is a cross-link (tryptophyl-tyrosyl-methioninium (Trp-Tyr) (with M-243)); the sequence is WHSAGTYRTT…LGAVQMGLIY (123 aa). His96 functions as the Proton acceptor in the catalytic mechanism. The tryptophyl-tyrosyl-methioninium (Tyr-Met) (with W-95) cross-link spans 217–243; sequence YVNPEGPNGNPDPLGSAKDIRETFARM. His258 contacts heme b.

The protein belongs to the peroxidase family. Peroxidase/catalase subfamily. In terms of assembly, homodimer or homotetramer. It depends on heme b as a cofactor. In terms of processing, formation of the three residue Trp-Tyr-Met cross-link is important for the catalase, but not the peroxidase activity of the enzyme.

It carries out the reaction H2O2 + AH2 = A + 2 H2O. It catalyses the reaction 2 H2O2 = O2 + 2 H2O. Functionally, bifunctional enzyme with both catalase and broad-spectrum peroxidase activity. The polypeptide is Catalase-peroxidase (Rhodopseudomonas palustris (strain BisB18)).